We begin with the raw amino-acid sequence, 489 residues long: Putative L,D-transpeptidase HI_1667 (489 aa).

Residues 10–29 traverse the membrane as a helical segment; sequence LSLFALSLSMMMSGCVLVGL. A L,D-TPase catalytic domain is found at 254 to 433; it reads NGIFVNIPSY…ETRKNTVLAS (180 aa). Residue H384 is the Proton donor/acceptor of the active site. C403 acts as the Nucleophile in catalysis.

The protein belongs to the YkuD family.

It is found in the membrane. It participates in cell wall biogenesis; peptidoglycan biosynthesis. The chain is Putative L,D-transpeptidase HI_1667 from Haemophilus influenzae (strain ATCC 51907 / DSM 11121 / KW20 / Rd).